Consider the following 502-residue polypeptide: MADDLSLGFTTVWNAVVSELNGESNTDDEATNDSTLVTPLTPQQRAWLNLVQPLTIIEGFALLSVPSSFVQNEIERHLRTPITDALSRRLGQQIQLGVRIAPPSTDHIDDNSSSADVLLTDDCGTDTDENYGEPLTGEYQGLPTYFTERPHHTESTVTGGTSLNRRYTFETFVIGASNRFAHAAALAIAEAPARAYNPLFIWGESGLGKTHLLHAAGNYAQRLFPGMRVKYVSTEEFTNDFINSLRDDRKVAFKRSYRDVDVLLVDDIQFIEGKEGIQEEFFHTFNTLHNANKQIVISSDRPPKQLATLEDRLRTRFEWGLITDVQPPELETRIAILRKKAQMERLAVPGDVLELIASSIERNIRELEGALIRVTAFASLNKTAIDKALAEIVLRDLIADASTMQISAATIMTATAEYFDTTIEELRGPGKTRALAQSRQIAMYLCRELTDLSLPKIGQAFGRDHTTVMYAQRKILSEMAERREVFDHVKELTTRIRQRSKR.

Residues 1 to 112 (MADDLSLGFT…PSTDHIDDNS (112 aa)) form a domain I, interacts with DnaA modulators region. Residues 113–161 (SSADVLLTDDCGTDTDENYGEPLTGEYQGLPTYFTERPHHTESTVTGGT) form a domain II region. Residues 162–378 (SLNRRYTFET…GALIRVTAFA (217 aa)) are domain III, AAA+ region. Residues Gly-206, Gly-208, Lys-209, and Thr-210 each contribute to the ATP site. A domain IV, binds dsDNA region spans residues 379 to 502 (SLNKTAIDKA…TTRIRQRSKR (124 aa)).

This sequence belongs to the DnaA family. In terms of assembly, oligomerizes as a right-handed, spiral filament on DNA at oriC.

The protein resides in the cytoplasm. Functionally, plays an essential role in the initiation and regulation of chromosomal replication. ATP-DnaA binds to the origin of replication (oriC) to initiate formation of the DNA replication initiation complex once per cell cycle. Binds the DnaA box (a 9 base pair repeat at the origin) and separates the double-stranded (ds)DNA. Forms a right-handed helical filament on oriC DNA; dsDNA binds to the exterior of the filament while single-stranded (ss)DNA is stabiized in the filament's interior. The ATP-DnaA-oriC complex binds and stabilizes one strand of the AT-rich DNA unwinding element (DUE), permitting loading of DNA polymerase. After initiation quickly degrades to an ADP-DnaA complex that is not apt for DNA replication. Binds acidic phospholipids. The protein is Chromosomal replication initiator protein DnaA of Mycobacterium leprae (strain TN).